An 896-amino-acid polypeptide reads, in one-letter code: Alanine--tRNA ligase (896 aa).

The Zn(2+) site is built by histidine 574, histidine 578, cysteine 677, and histidine 681.

It belongs to the class-II aminoacyl-tRNA synthetase family. Zn(2+) is required as a cofactor.

Its subcellular location is the cytoplasm. It catalyses the reaction tRNA(Ala) + L-alanine + ATP = L-alanyl-tRNA(Ala) + AMP + diphosphate. Functionally, catalyzes the attachment of alanine to tRNA(Ala) in a two-step reaction: alanine is first activated by ATP to form Ala-AMP and then transferred to the acceptor end of tRNA(Ala). Also edits incorrectly charged Ser-tRNA(Ala) and Gly-tRNA(Ala) via its editing domain. This is Alanine--tRNA ligase from Mycoplasma mycoides subsp. mycoides SC (strain CCUG 32753 / NCTC 10114 / PG1).